A 235-amino-acid chain; its full sequence is tRNA (guanine-N(1)-)-methyltransferase (235 aa).

Residues Gly-112 and 132–137 (LGDFVL) contribute to the S-adenosyl-L-methionine site.

Belongs to the RNA methyltransferase TrmD family. In terms of assembly, homodimer.

It localises to the cytoplasm. The enzyme catalyses guanosine(37) in tRNA + S-adenosyl-L-methionine = N(1)-methylguanosine(37) in tRNA + S-adenosyl-L-homocysteine + H(+). Its function is as follows. Specifically methylates guanosine-37 in various tRNAs. This Acaryochloris marina (strain MBIC 11017) protein is tRNA (guanine-N(1)-)-methyltransferase.